A 149-amino-acid chain; its full sequence is Transthyretin (149 aa).

The N-terminal stretch at 1–20 (MAFHSLLLLCLAGLVFLSEA) is a signal peptide. Residue Cys32 is modified to Sulfocysteine. L-thyroxine is bound at residue Lys37. Glu64 carries the post-translational modification 4-carboxyglutamate. L-thyroxine is bound by residues Glu76 and Ser139.

The protein belongs to the transthyretin family. Homotetramer. Dimer of dimers. In the homotetramer, subunits assemble around a central channel that can accommodate two ligand molecules. Interacts with RBP4. Post-translationally, sulfonation of the reactive cysteine Cys-32 enhances the stability of the native conformation of TTR, avoiding misassembly of the protein leading to amyloid formation. As to expression, highly expressed in the choroid plexus.

It is found in the secreted. Thyroid hormone-binding protein. Probably transports thyroxine from the bloodstream to the brain. The chain is Transthyretin (TTR) from Sminthopsis macroura (Stripe-faced dunnart).